Here is a 78-residue protein sequence, read N- to C-terminus: Probable [Fe-S]-dependent transcriptional repressor (78 aa).

The iron-sulfur cluster site is built by Cys-56, Cys-61, Cys-64, and Cys-70.

It belongs to the FeoC family.

May function as a transcriptional regulator that controls feoABC expression. The polypeptide is Probable [Fe-S]-dependent transcriptional repressor (Escherichia coli O7:K1 (strain IAI39 / ExPEC)).